We begin with the raw amino-acid sequence, 127 residues long: Probable toxin y4kH (127 aa).

Belongs to the MbcT/ParT/Res family.

Functionally, probable toxic component of a type II toxin-antitoxin (TA) system. It is not known which gene encodes its antitoxin. The sequence is that of Probable toxin y4kH from Sinorhizobium fredii (strain NBRC 101917 / NGR234).